The sequence spans 125 residues: Fluoride-specific ion channel FluC (125 aa).

Transmembrane regions (helical) follow at residues phenylalanine 7–valine 27, glycine 36–serine 56, proline 63–phenylalanine 83, and phenylalanine 96–cysteine 116. Residues glycine 75 and threonine 78 each contribute to the Na(+) site.

The protein belongs to the fluoride channel Fluc/FEX (TC 1.A.43) family.

The protein resides in the cell inner membrane. It catalyses the reaction fluoride(in) = fluoride(out). Na(+) is not transported, but it plays an essential structural role and its presence is essential for fluoride channel function. Fluoride-specific ion channel. Important for reducing fluoride concentration in the cell, thus reducing its toxicity. This chain is Fluoride-specific ion channel FluC, found in Elusimicrobium minutum (strain Pei191).